A 1384-amino-acid chain; its full sequence is Sterol 3-beta-glucosyltransferase (1384 aa).

Disordered regions lie at residues 1–64 (MPNM…DGQL), 86–189 (ARFD…TPRA), and 204–229 (DKKQ…QSCA). Residues 7–19 (LLEDAKRRVDRRL) are compositionally biased toward basic and acidic residues. Residues 21–36 (ASRQSISSSRIFSSAF) show a composition bias toward low complexity. The span at 38 to 47 (DRLKDDHDAQ) shows a compositional bias: basic and acidic residues. Over residues 146–156 (LRSLKPSPKSS) the composition is skewed to low complexity. Over residues 158 to 172 (GTETTVQTEPPTSDE) the composition is skewed to polar residues. Low complexity predominate over residues 174 to 189 (SPLASPRRARSATPRA). The segment covering 209–229 (ADQPSSSTKGETDGTSEQSCA) has biased composition (polar residues). The GRAM 1 domain maps to 237–284 (KEMFGFEMPEKVLMEYACSLLQNILLQGYMYVTEGHICFYAYLPRKSA). The PH domain occupies 285 to 384 (VTIRSGYLHK…WVKALQKVIF (100 aa)). 2 disordered regions span residues 457–526 (MKTS…RQRD) and 560–629 (NRSD…VNSS). 3 stretches are compositionally biased toward polar residues: residues 458 to 473 (KTSQ…TSPA), 483 to 494 (WSLNSDLSQSRG), and 560 to 572 (NRSD…TIHT). Over residues 578–588 (PSGDRTGRRLS) the composition is skewed to basic and acidic residues. A compositionally biased stretch (polar residues) spans 604-629 (RNGQEMQYASSDSDQGTQHPSKVNSS). Residues 714–817 (RFRAHFALPS…RDDCAVTVHQ (104 aa)) form the GRAM 2 domain. Positions 901, 902, 904, 1204, 1206, 1219, 1223, 1224, 1243, and 1244 each coordinate UDP-alpha-D-glucose. Residues 1322 to 1336 (VSSTPFSPTPSAKTT) show a composition bias toward polar residues. The tract at residues 1322-1350 (VSSTPFSPTPSAKTTAEQEEDDVDDSEEW) is disordered. Acidic residues predominate over residues 1338–1350 (EQEEDDVDDSEEW).

It belongs to the glycosyltransferase 28 family.

The protein resides in the cytoplasm. It localises to the preautophagosomal structure membrane. The enzyme catalyses a sterol + UDP-alpha-D-glucose = a sterol 3-beta-D-glucoside + UDP + H(+). It catalyses the reaction ergosterol + UDP-alpha-D-glucose = ergosteryl 3-beta-D-glucoside + UDP + H(+). In terms of biological role, sterol glycosyltransferase responsible for the glycosylation of ergosterol to form ergosterol-glucoside. Involved in cytoplasm to vacuole transport (Cvt), pexophagy or nonselective autophagy. The sequence is that of Sterol 3-beta-glucosyltransferase from Aspergillus oryzae (strain ATCC 42149 / RIB 40) (Yellow koji mold).